We begin with the raw amino-acid sequence, 155 residues long: Endoribonuclease YbeY (155 aa).

Residues His-114, His-118, and His-124 each coordinate Zn(2+).

Belongs to the endoribonuclease YbeY family. Requires Zn(2+) as cofactor.

It localises to the cytoplasm. In terms of biological role, single strand-specific metallo-endoribonuclease involved in late-stage 70S ribosome quality control and in maturation of the 3' terminus of the 16S rRNA. The sequence is that of Endoribonuclease YbeY from Buchnera aphidicola subsp. Acyrthosiphon pisum (strain APS) (Acyrthosiphon pisum symbiotic bacterium).